We begin with the raw amino-acid sequence, 1058 residues long: Carbamoyl phosphate synthase large chain (1058 aa).

Residues 1–401 are carboxyphosphate synthetic domain; it reads MPKRKDIQKI…SLLKACRSLE (401 aa). ATP is bound by residues arginine 129, arginine 169, glycine 175, glycine 176, arginine 208, isoleucine 210, glutamate 215, glycine 241, isoleucine 242, histidine 243, glutamine 284, and glutamate 298. An ATP-grasp 1 domain is found at 133–327; it reads KQLMQELDQP…IAKLAAKIAV (195 aa). Mg(2+)-binding residues include glutamine 284, glutamate 298, and asparagine 300. Glutamine 284, glutamate 298, and asparagine 300 together coordinate Mn(2+). The tract at residues 402-546 is oligomerization domain; it reads IGVCHNEMTS…YSTYELENES (145 aa). Positions 547 to 929 are carbamoyl phosphate synthetic domain; sequence VQSNKESILV…ALYKAFEANN (383 aa). In terms of domain architecture, ATP-grasp 2 spans 671 to 861; the sequence is EKALKELGIP…MAQIATKLIL (191 aa). ATP-binding residues include arginine 707, serine 746, isoleucine 748, glutamate 752, glycine 777, valine 778, histidine 779, serine 780, glutamine 820, and glutamate 832. Mg(2+) contacts are provided by glutamine 820, glutamate 832, and asparagine 834. Mn(2+)-binding residues include glutamine 820, glutamate 832, and asparagine 834. The region spanning 930 to 1058 is the MGS-like domain; sequence SHLSEFGQIV…ESRCFNIEAI (129 aa). The allosteric domain stretch occupies residues 930–1058; the sequence is SHLSEFGQIV…ESRCFNIEAI (129 aa).

It belongs to the CarB family. As to quaternary structure, composed of two chains; the small (or glutamine) chain promotes the hydrolysis of glutamine to ammonia, which is used by the large (or ammonia) chain to synthesize carbamoyl phosphate. Tetramer of heterodimers (alpha,beta)4. The cofactor is Mg(2+). Requires Mn(2+) as cofactor.

The enzyme catalyses hydrogencarbonate + L-glutamine + 2 ATP + H2O = carbamoyl phosphate + L-glutamate + 2 ADP + phosphate + 2 H(+). The catalysed reaction is hydrogencarbonate + NH4(+) + 2 ATP = carbamoyl phosphate + 2 ADP + phosphate + 2 H(+). It participates in amino-acid biosynthesis; L-arginine biosynthesis; carbamoyl phosphate from bicarbonate: step 1/1. Its pathway is pyrimidine metabolism; UMP biosynthesis via de novo pathway; (S)-dihydroorotate from bicarbonate: step 1/3. In terms of biological role, large subunit of the glutamine-dependent carbamoyl phosphate synthetase (CPSase). CPSase catalyzes the formation of carbamoyl phosphate from the ammonia moiety of glutamine, carbonate, and phosphate donated by ATP, constituting the first step of 2 biosynthetic pathways, one leading to arginine and/or urea and the other to pyrimidine nucleotides. The large subunit (synthetase) binds the substrates ammonia (free or transferred from glutamine from the small subunit), hydrogencarbonate and ATP and carries out an ATP-coupled ligase reaction, activating hydrogencarbonate by forming carboxy phosphate which reacts with ammonia to form carbamoyl phosphate. The chain is Carbamoyl phosphate synthase large chain from Streptococcus pyogenes serotype M18 (strain MGAS8232).